Reading from the N-terminus, the 2312-residue chain is Protein Ycf2 (2312 aa).

1630 to 1637 (GSIGTGRS) serves as a coordination point for ATP.

It belongs to the Ycf2 family.

It is found in the plastid. The protein resides in the chloroplast stroma. In terms of biological role, probable ATPase of unknown function. Its presence in a non-photosynthetic plant (Epifagus virginiana) and experiments in tobacco indicate that it has an essential function which is probably not related to photosynthesis. This Manihot esculenta (Cassava) protein is Protein Ycf2.